A 324-amino-acid chain; its full sequence is tRNA-dihydrouridine(20a/20b) synthase [NAD(P)+]-like (324 aa).

FMN is bound by residues 33 to 35 (PMV) and Gln87. The active-site Proton donor is the Cys116. Residues Lys158, His186, 216 to 218 (NGD), and 240 to 241 (AR) contribute to the FMN site.

The protein belongs to the Dus family. Dus4 subfamily. FMN serves as cofactor.

It carries out the reaction 5,6-dihydrouridine(20a) in tRNA + NADP(+) = uridine(20a) in tRNA + NADPH + H(+). It catalyses the reaction 5,6-dihydrouridine(20a) in tRNA + NAD(+) = uridine(20a) in tRNA + NADH + H(+). The catalysed reaction is 5,6-dihydrouridine(20b) in tRNA + NAD(+) = uridine(20b) in tRNA + NADH + H(+). The enzyme catalyses 5,6-dihydrouridine(20b) in tRNA + NADP(+) = uridine(20b) in tRNA + NADPH + H(+). Catalyzes the synthesis of dihydrouridine, a modified base found in the D-loop of most tRNAs. The protein is tRNA-dihydrouridine(20a/20b) synthase [NAD(P)+]-like (Dus4l) of Mus musculus (Mouse).